A 37-amino-acid polypeptide reads, in one-letter code: Large ribosomal subunit protein bL36 (37 aa).

Belongs to the bacterial ribosomal protein bL36 family.

This Mycobacteroides abscessus (strain ATCC 19977 / DSM 44196 / CCUG 20993 / CIP 104536 / JCM 13569 / NCTC 13031 / TMC 1543 / L948) (Mycobacterium abscessus) protein is Large ribosomal subunit protein bL36.